The following is a 318-amino-acid chain: 4-hydroxy-3-methylbut-2-enyl diphosphate reductase (318 aa).

C21 is a [4Fe-4S] cluster binding site. Positions 50 and 83 each coordinate (2E)-4-hydroxy-3-methylbut-2-enyl diphosphate. Dimethylallyl diphosphate is bound by residues H50 and H83. H50 and H83 together coordinate isopentenyl diphosphate. C105 provides a ligand contact to [4Fe-4S] cluster. H133 is a (2E)-4-hydroxy-3-methylbut-2-enyl diphosphate binding site. H133 is a binding site for dimethylallyl diphosphate. H133 contributes to the isopentenyl diphosphate binding site. E135 functions as the Proton donor in the catalytic mechanism. T176 contacts (2E)-4-hydroxy-3-methylbut-2-enyl diphosphate. A [4Fe-4S] cluster-binding site is contributed by C206. 4 residues coordinate (2E)-4-hydroxy-3-methylbut-2-enyl diphosphate: S234, S235, N236, and S278. Dimethylallyl diphosphate contacts are provided by S234, S235, N236, and S278. Isopentenyl diphosphate-binding residues include S234, S235, N236, and S278.

This sequence belongs to the IspH family. The cofactor is [4Fe-4S] cluster.

The catalysed reaction is isopentenyl diphosphate + 2 oxidized [2Fe-2S]-[ferredoxin] + H2O = (2E)-4-hydroxy-3-methylbut-2-enyl diphosphate + 2 reduced [2Fe-2S]-[ferredoxin] + 2 H(+). It catalyses the reaction dimethylallyl diphosphate + 2 oxidized [2Fe-2S]-[ferredoxin] + H2O = (2E)-4-hydroxy-3-methylbut-2-enyl diphosphate + 2 reduced [2Fe-2S]-[ferredoxin] + 2 H(+). It participates in isoprenoid biosynthesis; dimethylallyl diphosphate biosynthesis; dimethylallyl diphosphate from (2E)-4-hydroxy-3-methylbutenyl diphosphate: step 1/1. It functions in the pathway isoprenoid biosynthesis; isopentenyl diphosphate biosynthesis via DXP pathway; isopentenyl diphosphate from 1-deoxy-D-xylulose 5-phosphate: step 6/6. In terms of biological role, catalyzes the conversion of 1-hydroxy-2-methyl-2-(E)-butenyl 4-diphosphate (HMBPP) into a mixture of isopentenyl diphosphate (IPP) and dimethylallyl diphosphate (DMAPP). Acts in the terminal step of the DOXP/MEP pathway for isoprenoid precursor biosynthesis. This is 4-hydroxy-3-methylbut-2-enyl diphosphate reductase from Shewanella oneidensis (strain ATCC 700550 / JCM 31522 / CIP 106686 / LMG 19005 / NCIMB 14063 / MR-1).